The following is a 205-amino-acid chain: Probable NAD(P)H dehydrogenase (quinone) FQR1-like 1 (205 aa).

Residues 5 to 192 enclose the Flavodoxin-like domain; it reads VYIVYYSMYG…GQAFHQGKYI (188 aa). Residues 11 to 15, 112 to 165, and His136 each bind FMN; these read SMYGH and IFYS…SPYG. Residue Tyr13 coordinates NAD(+).

Belongs to the WrbA family. The cofactor is FMN.

The protein localises to the cell membrane. The catalysed reaction is a quinone + NADH + H(+) = a quinol + NAD(+). It carries out the reaction a quinone + NADPH + H(+) = a quinol + NADP(+). Catalyzes the transfer of electrons from NADH and NADPH to reduce quinone to the hydroquinone state. The sequence is that of Probable NAD(P)H dehydrogenase (quinone) FQR1-like 1 from Arabidopsis thaliana (Mouse-ear cress).